The chain runs to 192 residues: Imidazoleglycerol-phosphate dehydratase (192 aa).

The protein belongs to the imidazoleglycerol-phosphate dehydratase family.

The protein resides in the cytoplasm. The enzyme catalyses D-erythro-1-(imidazol-4-yl)glycerol 3-phosphate = 3-(imidazol-4-yl)-2-oxopropyl phosphate + H2O. The protein operates within amino-acid biosynthesis; L-histidine biosynthesis; L-histidine from 5-phospho-alpha-D-ribose 1-diphosphate: step 6/9. The protein is Imidazoleglycerol-phosphate dehydratase of Staphylococcus epidermidis (strain ATCC 12228 / FDA PCI 1200).